A 682-amino-acid polypeptide reads, in one-letter code: Homeobox-leucine zipper protein HDG7 (682 aa).

The disordered stretch occupies residues Leu33 to Thr65. Residues Pro52–Thr65 are compositionally biased toward basic residues. The homeobox DNA-binding region spans Arg57–Leu116. Positions Phe105–Arg186 form a coiled coil. Residues Ser214–Met429 form the START domain.

This sequence belongs to the HD-ZIP homeobox family. Class IV subfamily. In terms of assembly, interacts with AIL7/PLT7. In terms of tissue distribution, expressed in cells around the base of leaf primordia, in the outermost 2 to 3 cell layers along the boundary between two leaf primordia. Expressed in lateral root primordia and tips, and in the epidermal boundaries of two cotyledons at heart-stage embryo.

The protein resides in the nucleus. Probable transcription factor that binds to the DNA sequence 5'-GCATTAAATGC-3'. Seems to promote cell differentiation. The protein is Homeobox-leucine zipper protein HDG7 of Arabidopsis thaliana (Mouse-ear cress).